We begin with the raw amino-acid sequence, 104 residues long: Small ribosomal subunit protein bS18c (104 aa).

Belongs to the bacterial ribosomal protein bS18 family. As to quaternary structure, part of the 30S ribosomal subunit.

The protein localises to the plastid. Its subcellular location is the chloroplast. This is Small ribosomal subunit protein bS18c from Lotus japonicus (Lotus corniculatus var. japonicus).